We begin with the raw amino-acid sequence, 665 residues long: Filensin (665 aa).

The tract at residues Met1–Ser40 is head. Ser5 is subject to Phosphoserine. The region spanning Ser40–Leu320 is the IF rod domain. The tract at residues Leu41–Phe75 is coil 1A. An N-acetylalanine modification is found at Ala42. Positions Gln76–Pro84 are linker 1. The coil 1B stretch occupies residues Glu85–Gln184. The interval Thr185–Ser201 is linker 12. Residues Ile202 to Leu320 form a coil 2 region. The interval Thr321–Ser665 is tail. 2 positions are modified to phosphoserine: Ser341 and Ser420. Disordered regions lie at residues Ser410–Lys439 and Tyr506–Pro614. The N-myristoyl glycine moiety is linked to residue Gly434. Ser513 carries the phosphoserine modification. Basic and acidic residues predominate over residues Pro556–Arg571. Ser665 is modified (phosphoserine).

The protein belongs to the intermediate filament family. In terms of assembly, part of a complex required for lens intermediate filament formation composed of BFSP1, BFSP2 and CRYAA. Identified in a complex that contains VIM, EZR, AHNAK, BFSP1, BFSP2, ANK2, PLEC, PRX and spectrin. Found in a complex composed of PPL (via C-terminal linker domain), BFSP1 and BFSP2 in the retinal lens. Within the complex interacts with BFSP2. Interacts (via C-terminus) with MIP (via C-terminus) in aged lens fiber cells. Proteolytically cleaved during lens cell fiber differentiation with increased fragmentation as fiber cell age increases. Post-translationally, myristoylated at Gly-434 following proteolytic cleavage at Asp-433. In terms of processing, acetylated at Ala-42 following proteolytic cleavage at Leu-41. In terms of tissue distribution, expressed in the cortex and nucleus of the retina lens (at protein level).

It localises to the cell membrane. Its subcellular location is the cytoplasm. The protein resides in the cytoskeleton. The protein localises to the cell cortex. In terms of biological role, required for the correct formation of lens intermediate filaments as part of a complex composed of BFSP1, BFSP2 and CRYAA. Involved in altering the calcium regulation of MIP water permeability. This is Filensin (BFSP1) from Homo sapiens (Human).